Consider the following 1309-residue polypeptide: Mediator of RNA polymerase II transcription subunit 33A (1309 aa).

Positions 809–829 (QTLNPVNSGTSSSSGAASEDS) are disordered. Residues 816–826 (SGTSSSSGAAS) are compositionally biased toward low complexity.

This sequence belongs to the Mediator complex subunit 33 family. In terms of assembly, component of the Mediator complex.

The protein localises to the nucleus. Component of the Mediator complex, a coactivator involved in the regulated transcription of nearly all RNA polymerase II-dependent genes. Mediator functions as a bridge to convey information from gene-specific regulatory proteins to the basal RNA polymerase II transcription machinery. The Mediator complex, having a compact conformation in its free form, is recruited to promoters by direct interactions with regulatory proteins and serves for the assembly of a functional preinitiation complex with RNA polymerase II and the general transcription factors. Involved in the repression of phenylpropanoid biosynthesis. May compete with MED33B for common binding partners or for occupancy in Mediator. In Arabidopsis thaliana (Mouse-ear cress), this protein is Mediator of RNA polymerase II transcription subunit 33A (MED33A).